The following is a 165-amino-acid chain: RxLR effector protein PITG_09218 (165 aa).

The N-terminal stretch at 1–24 (MRFSAFLTLLLVAFVASCSTFASA) is a signal peptide. The RxLR-dEER motif lies at 31–57 (RRLRADAAPVPVNKDNVAKLAGGFLEK). Residues 129 to 149 (VTLGATVAGFAIYGAYKALFD) traverse the membrane as a helical segment.

The protein belongs to the RxLR effector family.

It is found in the secreted. The protein localises to the host mitochondrion membrane. It localises to the host endoplasmic reticulum membrane. In terms of biological role, effector that enhances P.infestans colonization of Nicotiana benthamiana leaves. The protein is RxLR effector protein PITG_09218 of Phytophthora infestans (strain T30-4) (Potato late blight agent).